Consider the following 359-residue polypeptide: 3-dehydroquinate synthase (359 aa).

NAD(+) contacts are provided by residues 71–76, 105–109, 129–130, Lys-142, Lys-151, and 169–172; these read DGEQFK, GVIGD, TT, and CLHT. Zn(2+) contacts are provided by Glu-184, His-247, and His-264.

Belongs to the sugar phosphate cyclases superfamily. Dehydroquinate synthase family. The cofactor is Co(2+). Zn(2+) is required as a cofactor. It depends on NAD(+) as a cofactor.

It is found in the cytoplasm. It catalyses the reaction 7-phospho-2-dehydro-3-deoxy-D-arabino-heptonate = 3-dehydroquinate + phosphate. It functions in the pathway metabolic intermediate biosynthesis; chorismate biosynthesis; chorismate from D-erythrose 4-phosphate and phosphoenolpyruvate: step 2/7. In terms of biological role, catalyzes the conversion of 3-deoxy-D-arabino-heptulosonate 7-phosphate (DAHP) to dehydroquinate (DHQ). The chain is 3-dehydroquinate synthase from Shewanella putrefaciens (strain CN-32 / ATCC BAA-453).